A 109-amino-acid polypeptide reads, in one-letter code: Small ribosomal subunit protein eS25 (109 aa).

Residues 1-36 (MGGASKKPISTVEKRMKKMAEEQQKKQQKRATTKTG) form a disordered region. Residues 12-25 (VEKRMKKMAEEQQK) show a composition bias toward basic and acidic residues.

This sequence belongs to the eukaryotic ribosomal protein eS25 family.

This Sulfurisphaera tokodaii (strain DSM 16993 / JCM 10545 / NBRC 100140 / 7) (Sulfolobus tokodaii) protein is Small ribosomal subunit protein eS25 (rps25e).